The primary structure comprises 363 residues: Phosphoserine aminotransferase (363 aa).

An L-glutamate-binding site is contributed by Arg42. Pyridoxal 5'-phosphate is bound by residues 76 to 77, Trp102, Thr156, Asp175, and Gln198; that span reads GR. Lys199 bears the N6-(pyridoxal phosphate)lysine mark. Pyridoxal 5'-phosphate is bound at residue 240-241; sequence NT.

The protein belongs to the class-V pyridoxal-phosphate-dependent aminotransferase family. SerC subfamily. Homodimer. The cofactor is pyridoxal 5'-phosphate.

Its subcellular location is the cytoplasm. The catalysed reaction is O-phospho-L-serine + 2-oxoglutarate = 3-phosphooxypyruvate + L-glutamate. It carries out the reaction 4-(phosphooxy)-L-threonine + 2-oxoglutarate = (R)-3-hydroxy-2-oxo-4-phosphooxybutanoate + L-glutamate. Its pathway is amino-acid biosynthesis; L-serine biosynthesis; L-serine from 3-phospho-D-glycerate: step 2/3. It participates in cofactor biosynthesis; pyridoxine 5'-phosphate biosynthesis; pyridoxine 5'-phosphate from D-erythrose 4-phosphate: step 3/5. Its function is as follows. Catalyzes the reversible conversion of 3-phosphohydroxypyruvate to phosphoserine and of 3-hydroxy-2-oxo-4-phosphonooxybutanoate to phosphohydroxythreonine. The protein is Phosphoserine aminotransferase of Shewanella denitrificans (strain OS217 / ATCC BAA-1090 / DSM 15013).